A 142-amino-acid chain; its full sequence is FAD synthase (142 aa).

Residues 9-10, 14-17, aspartate 93, and tyrosine 120 contribute to the ATP site; these read VF and HLGH.

It belongs to the archaeal FAD synthase family. As to quaternary structure, homodimer. A divalent metal cation is required as a cofactor.

It carries out the reaction FMN + ATP + H(+) = FAD + diphosphate. The protein operates within cofactor biosynthesis; FAD biosynthesis; FAD from FMN: step 1/1. Functionally, catalyzes the transfer of the AMP portion of ATP to flavin mononucleotide (FMN) to produce flavin adenine dinucleotide (FAD) coenzyme. The protein is FAD synthase of Thermoplasma acidophilum (strain ATCC 25905 / DSM 1728 / JCM 9062 / NBRC 15155 / AMRC-C165).